The sequence spans 449 residues: Sensor protein QseC (449 aa).

Over 1 to 12 (MKLTQRLSLRVR) the chain is Cytoplasmic. A helical transmembrane segment spans residues 13 to 33 (LTLIFLILVSITWAISSFVAW). Over 34 to 161 (RKTTDNVDEL…REDMALAIVA (128 aa)) the chain is Periplasmic. A helical membrane pass occupies residues 162 to 182 (AQLTPWLIALPFMLLILLLLL). Residues 183–235 (HRELRPLKKLAQALRFRSPESETPLDAKGVPSEVRPLVEALNQLFSRIHSMMV) enclose the HAMP domain. Residues 183–449 (HRELRPLKKL…EGGFEAVVRW (267 aa)) lie on the Cytoplasmic side of the membrane. The Histidine kinase domain maps to 243–449 (DAAHELRSPL…EGGFEAVVRW (207 aa)). Phosphohistidine; by autocatalysis is present on H246.

The protein localises to the cell inner membrane. The enzyme catalyses ATP + protein L-histidine = ADP + protein N-phospho-L-histidine.. Its function is as follows. Member of a two-component regulatory system QseB/QseC. Activates the flagella regulon by activating transcription of FlhDC. May activate QseB by phosphorylation. The polypeptide is Sensor protein QseC (qseC) (Salmonella typhi).